The chain runs to 309 residues: MGLIGKDLIGLRDMPAERIKLILDTAVPMKEIIRRQIKKVPTLRGRTVVTVFYEASTRTRTSFELAAKYLSADTVTIAAAASSVSKGESLKDTARTIAAMGADAVVLRHPMAGAAELLARTVDAAVINAGDGAHEHPSQALLDLFTVREKKGRLEGLKVAIIGDIMHSRVARSDIWGFTRMGAEVRLAGPATLLPPGLEKMGARVCSSVEEALMDADVVIVLRIQLERQQQGLFPGLREYARLFGINRERLRLAAPGAVVMHPGPMNRGIEISPEVADGLQSAINEQVNNGVAVRMALLYLLTGGGCRK.

2 residues coordinate carbamoyl phosphate: Arg-58 and Thr-59. Lys-86 is an L-aspartate binding site. 3 residues coordinate carbamoyl phosphate: Arg-108, His-136, and Gln-139. L-aspartate-binding residues include Arg-169 and Arg-223. Carbamoyl phosphate-binding residues include Gly-264 and Pro-265.

The protein belongs to the aspartate/ornithine carbamoyltransferase superfamily. ATCase family. In terms of assembly, heterododecamer (2C3:3R2) of six catalytic PyrB chains organized as two trimers (C3), and six regulatory PyrI chains organized as three dimers (R2).

It catalyses the reaction carbamoyl phosphate + L-aspartate = N-carbamoyl-L-aspartate + phosphate + H(+). The protein operates within pyrimidine metabolism; UMP biosynthesis via de novo pathway; (S)-dihydroorotate from bicarbonate: step 2/3. In terms of biological role, catalyzes the condensation of carbamoyl phosphate and aspartate to form carbamoyl aspartate and inorganic phosphate, the committed step in the de novo pyrimidine nucleotide biosynthesis pathway. In Pelotomaculum thermopropionicum (strain DSM 13744 / JCM 10971 / SI), this protein is Aspartate carbamoyltransferase catalytic subunit.